The chain runs to 308 residues: N-acetylmuramic acid 6-phosphate etherase (308 aa).

The SIS domain maps to 62–225 (ITDAFKVGGR…TTASMIRLGK (164 aa)). Glu-90 serves as the catalytic Proton donor. Residue Glu-121 is part of the active site.

Belongs to the GCKR-like family. MurNAc-6-P etherase subfamily. Homodimer.

It catalyses the reaction N-acetyl-D-muramate 6-phosphate + H2O = N-acetyl-D-glucosamine 6-phosphate + (R)-lactate. Its pathway is amino-sugar metabolism; 1,6-anhydro-N-acetylmuramate degradation. It participates in amino-sugar metabolism; N-acetylmuramate degradation. It functions in the pathway cell wall biogenesis; peptidoglycan recycling. Its function is as follows. Specifically catalyzes the cleavage of the D-lactyl ether substituent of MurNAc 6-phosphate, producing GlcNAc 6-phosphate and D-lactate. Together with AnmK, is also required for the utilization of anhydro-N-acetylmuramic acid (anhMurNAc) either imported from the medium or derived from its own cell wall murein, and thus plays a role in cell wall recycling. This chain is N-acetylmuramic acid 6-phosphate etherase, found in Vibrio campbellii (strain ATCC BAA-1116).